The sequence spans 173 residues: Translationally-controlled tumor protein homolog (173 aa).

The 173-residue stretch at 1-173 folds into the TCTP domain; sequence MIIFKDMITG…FKHGLEEEKV (173 aa).

Belongs to the TCTP family. Expressed by the venom gland.

It is found in the secreted. Functionally, venom protein that causes edema, enhances vascular permeability and is likely related to the inflammatory activity of the venom. In Grammostola rosea (Chilean rose tarantula), this protein is Translationally-controlled tumor protein homolog.